A 909-amino-acid polypeptide reads, in one-letter code: Ribosome-releasing factor 2, mitochondrial (909 aa).

The N-terminal 15 residues, 1–15, are a transit peptide targeting the mitochondrion; the sequence is MVAAPLLRAHQAARL. Residues 57 to 367 form the tr-type G domain; the sequence is DRTRNIGIIA…AVTNLLPSPP (311 aa). 66 to 73 serves as a coordination point for GTP; sequence AHIDAGKT. Positions 121–148 are disordered; sequence WPPQTAGDGNTTPQEPQTPRSASSHTVN. Residues 127–148 show a composition bias toward polar residues; it reads GDGNTTPQEPQTPRSASSHTVN. Residues 151 to 155 and 205 to 208 each bind GTP; these read DTPGH and NKLD.

The protein belongs to the TRAFAC class translation factor GTPase superfamily. Classic translation factor GTPase family. EF-G/EF-2 subfamily.

The protein resides in the mitochondrion. In terms of biological role, mitochondrial GTPase that mediates the disassembly of ribosomes from messenger RNA at the termination of mitochondrial protein biosynthesis. Not involved in the GTP-dependent ribosomal translocation step during translation elongation. This is Ribosome-releasing factor 2, mitochondrial (mef2) from Aspergillus flavus (strain ATCC 200026 / FGSC A1120 / IAM 13836 / NRRL 3357 / JCM 12722 / SRRC 167).